Consider the following 62-residue polypeptide: Defensin BmKDfsin4 (62 aa).

Positions 1–24 (MKTIVLLFVLALVFCTLEMGIVEA) are cleaved as a signal peptide. Disulfide bonds link Cys-28–Cys-49, Cys-35–Cys-57, and Cys-39–Cys-59.

The protein belongs to the invertebrate defensin family. Type 2 subfamily.

The protein resides in the secreted. Its function is as follows. Dual-function peptide with antimicrobial and potassium channel-blocking activities. Shows inhibitory activity against Gram-positive bacteria such as S.aureus, B.subtilis, and M.luteus as well as methicillin-resistant S.aureus (MIC=0.1-20 uM). Does not act on bacteria by disrupting membranes. Also moderately inhibits Kv1.1/KCNA1 (25.2% inhibition at 1 uM), Kv1.2/KCNA2 (30.5% inhibition at 1 uM), and Kv1.3/KCNA3 potassium channels (IC(50)=510.2 nM, 61% inhibition at 1 uM). Inhibits potassium channels by interacting with the pore region. Does not show hemolytic activity. In vitro, dose-dependently decreases the production of Hepatitis B virus (HBV) DNA and HBV viral proteins in both culture medium and cell lysate. In Olivierus martensii (Manchurian scorpion), this protein is Defensin BmKDfsin4.